The chain runs to 551 residues: Chaperonin GroEL (551 aa).

ATP is bound by residues 30-33 (TLGP), Lys51, 87-91 (DGTTT), Gly415, 479-481 (NAA), and Asp495.

This sequence belongs to the chaperonin (HSP60) family. Forms a cylinder of 14 subunits composed of two heptameric rings stacked back-to-back. Interacts with the co-chaperonin GroES.

The protein localises to the cytoplasm. The enzyme catalyses ATP + H2O + a folded polypeptide = ADP + phosphate + an unfolded polypeptide.. Together with its co-chaperonin GroES, plays an essential role in assisting protein folding. The GroEL-GroES system forms a nano-cage that allows encapsulation of the non-native substrate proteins and provides a physical environment optimized to promote and accelerate protein folding. This Acidithiobacillus ferrooxidans (strain ATCC 23270 / DSM 14882 / CIP 104768 / NCIMB 8455) (Ferrobacillus ferrooxidans (strain ATCC 23270)) protein is Chaperonin GroEL.